The following is a 106-amino-acid chain: Putative double-stranded DNA mimic protein VV1228 (106 aa).

It belongs to the putative dsDNA mimic protein family.

Its function is as follows. May act as a double-stranded DNA (dsDNA) mimic. Probably regulates the activity of a dsDNA-binding protein. The chain is Putative double-stranded DNA mimic protein VV1228 from Vibrio vulnificus (strain YJ016).